The chain runs to 157 residues: Transcription antitermination protein NusB (157 aa).

Belongs to the NusB family.

Functionally, involved in transcription antitermination. Required for transcription of ribosomal RNA (rRNA) genes. Binds specifically to the boxA antiterminator sequence of the ribosomal RNA (rrn) operons. The chain is Transcription antitermination protein NusB from Helicobacter hepaticus (strain ATCC 51449 / 3B1).